The chain runs to 105 residues: Small ribosomal subunit protein uS10 (105 aa).

This sequence belongs to the universal ribosomal protein uS10 family. As to quaternary structure, part of the 30S ribosomal subunit.

In terms of biological role, involved in the binding of tRNA to the ribosomes. The polypeptide is Small ribosomal subunit protein uS10 (Francisella tularensis subsp. mediasiatica (strain FSC147)).